A 184-amino-acid chain; its full sequence is Large ribosomal subunit protein uL5 (184 aa).

Belongs to the universal ribosomal protein uL5 family. As to quaternary structure, component of the large ribosomal subunit. Interacts with Fmr1 to form the RNA-induced silencing complex (RISC), a ribonucleoprotein (RNP) complex involved in translation regulation, other components of the complex are RpL5, Rm62, AGO2 and Dcr-1.

It is found in the nucleus. Its subcellular location is the cytoplasm. Functionally, component of the ribosome, a large ribonucleoprotein complex responsible for the synthesis of proteins in the cell. The small ribosomal subunit (SSU) binds messenger RNAs (mRNAs) and translates the encoded message by selecting cognate aminoacyl-transfer RNA (tRNA) molecules. The large subunit (LSU) contains the ribosomal catalytic site termed the peptidyl transferase center (PTC), which catalyzes the formation of peptide bonds, thereby polymerizing the amino acids delivered by tRNAs into a polypeptide chain. The nascent polypeptides leave the ribosome through a tunnel in the LSU and interact with protein factors that function in enzymatic processing, targeting, and the membrane insertion of nascent chains at the exit of the ribosomal tunnel. The protein is Large ribosomal subunit protein uL5 (RpL11) of Drosophila melanogaster (Fruit fly).